A 245-amino-acid chain; its full sequence is 8-amino-3,8-dideoxy-manno-octulosonate cytidylyltransferase (245 aa).

The protein belongs to the KdsB family.

The protein resides in the cytoplasm. It catalyses the reaction 8-amino-3,8-dideoxy-alpha-D-manno-octulosonate + CTP = CMP-8-amino-3,8-dideoxy-alpha-D-manno-oct-2-ulosonate + diphosphate. It functions in the pathway bacterial outer membrane biogenesis; lipopolysaccharide biosynthesis. Activates KDO8N (a required 8-carbon sugar) for incorporation into bacterial lipopolysaccharide in the Shewanella genus. This Shewanella frigidimarina (strain NCIMB 400) protein is 8-amino-3,8-dideoxy-manno-octulosonate cytidylyltransferase.